Here is a 217-residue protein sequence, read N- to C-terminus: AFG2-interacting ribosome maturation factor (217 aa).

In terms of assembly, part of the 55LCC heterohexameric ATPase complex composed at least of AIRIM, AFG2A, AFG2B and CINP. Does not associate with pre-60S ribosomal particles. In terms of processing, phosphorylated on serines by CK2 kinase.

The protein localises to the nucleus. The protein resides in the cytoplasm. Its function is as follows. Part of the 55LCC heterohexameric ATPase complex which is chromatin-associated and promotes replisome proteostasis to maintain replication fork progression and genome stability. Required for replication fork progression, sister chromatid cohesion, and chromosome stability. The ATPase activity is specifically enhanced by replication fork DNA and is coupled to cysteine protease-dependent cleavage of replisome substrates in response to replication fork damage. Uses ATPase activity to process replisome substrates in S-phase, facilitating their proteolytic turnover from chromatin to ensure DNA replication and mitotic fidelity. Involved in the cytoplasmic maturation steps of pre-60S ribosomal particles by promoting the release of shuttling protein RSL24D1/RLP24 from the pre-ribosomal particles. The sequence is that of AFG2-interacting ribosome maturation factor (Airim) from Mus musculus (Mouse).